Here is a 296-residue protein sequence, read N- to C-terminus: Large ribosomal subunit protein uL18A (296 aa).

The tract at residues 251-296 (PVHEKKPKKEVKKKRWNRAKLSLEQKKDRVAQKKASFLRAQEKADS) is disordered. Over residues 255-268 (KKPKKEVKKKRWNR) the composition is skewed to basic residues. Positions 271 to 281 (LSLEQKKDRVA) are enriched in basic and acidic residues.

The protein belongs to the universal ribosomal protein uL18 family. Component of the large ribosomal subunit (LSU). Part of a LSU subcomplex, the 5S RNP which is composed of the 5S RNA, RPL5 and RPL11.

Its subcellular location is the cytoplasm. It is found in the nucleus. It localises to the nucleolus. Its function is as follows. Component of the ribosome, a large ribonucleoprotein complex responsible for the synthesis of proteins in the cell. The small ribosomal subunit (SSU) binds messenger RNAs (mRNAs) and translates the encoded message by selecting cognate aminoacyl-transfer RNA (tRNA) molecules. The large subunit (LSU) contains the ribosomal catalytic site termed the peptidyl transferase center (PTC), which catalyzes the formation of peptide bonds, thereby polymerizing the amino acids delivered by tRNAs into a polypeptide chain. The nascent polypeptides leave the ribosome through a tunnel in the LSU and interact with protein factors that function in enzymatic processing, targeting, and the membrane insertion of nascent chains at the exit of the ribosomal tunnel. As part of the 5S RNP/5S ribonucleoprotein particle it is an essential component of the LSU, required for its formation and the maturation of rRNAs. It also couples ribosome biogenesis to p53/TP53 activation. As part of the 5S RNP it accumulates in the nucleoplasm and inhibits MDM2, when ribosome biogenesis is perturbed, mediating the stabilization and the activation of TP53. The sequence is that of Large ribosomal subunit protein uL18A (rpl5-a) from Xenopus laevis (African clawed frog).